The primary structure comprises 214 residues: tRNA (guanine-N(7)-)-methyltransferase (214 aa).

Residues glutamate 43, glutamate 68, asparagine 99, and aspartate 121 each contribute to the S-adenosyl-L-methionine site. Aspartate 121 is an active-site residue. Residues lysine 125, aspartate 157, and 194-197 each bind substrate; that span reads TEYE.

This sequence belongs to the class I-like SAM-binding methyltransferase superfamily. TrmB family.

The catalysed reaction is guanosine(46) in tRNA + S-adenosyl-L-methionine = N(7)-methylguanosine(46) in tRNA + S-adenosyl-L-homocysteine. Its pathway is tRNA modification; N(7)-methylguanine-tRNA biosynthesis. Functionally, catalyzes the formation of N(7)-methylguanine at position 46 (m7G46) in tRNA. The chain is tRNA (guanine-N(7)-)-methyltransferase from Alkaliphilus metalliredigens (strain QYMF).